The sequence spans 212 residues: Pyridoxine/pyridoxamine 5'-phosphate oxidase (212 aa).

Substrate is bound by residues 8–11 (RRNY) and Lys66. Residues 61 to 66 (RIVLLK), 76 to 77 (FT), Arg82, Lys83, and Gln105 contribute to the FMN site. Residues Tyr123, Arg127, and Ser131 each coordinate substrate. Residues 140–141 (QS) and Trp184 each bind FMN. Position 190 to 192 (190 to 192 (RLH)) interacts with substrate. Arg194 serves as a coordination point for FMN.

The protein belongs to the pyridoxamine 5'-phosphate oxidase family. As to quaternary structure, homodimer. FMN serves as cofactor.

The catalysed reaction is pyridoxamine 5'-phosphate + O2 + H2O = pyridoxal 5'-phosphate + H2O2 + NH4(+). It catalyses the reaction pyridoxine 5'-phosphate + O2 = pyridoxal 5'-phosphate + H2O2. Its pathway is cofactor metabolism; pyridoxal 5'-phosphate salvage; pyridoxal 5'-phosphate from pyridoxamine 5'-phosphate: step 1/1. It functions in the pathway cofactor metabolism; pyridoxal 5'-phosphate salvage; pyridoxal 5'-phosphate from pyridoxine 5'-phosphate: step 1/1. Catalyzes the oxidation of either pyridoxine 5'-phosphate (PNP) or pyridoxamine 5'-phosphate (PMP) into pyridoxal 5'-phosphate (PLP). This Cupriavidus metallidurans (strain ATCC 43123 / DSM 2839 / NBRC 102507 / CH34) (Ralstonia metallidurans) protein is Pyridoxine/pyridoxamine 5'-phosphate oxidase.